Here is a 225-residue protein sequence, read N- to C-terminus: Transcriptional activator protein CUP2 (225 aa).

Positions 1 to 40 (MVVINGVKYACETCIRGHRAAQCTHTDGPLQMIRRKGRPS) form a DNA-binding region, copper-fist. A binds copper and DNA region spans residues 1–108 (MVVINGVKYA…KSKGGSCHRR (108 aa)). Zn(2+)-binding residues include cysteine 11, cysteine 14, cysteine 23, and histidine 25. Residues 109–225 (ANDEAAHVNG…QVSSHNSHSQ (117 aa)) form a required for transcriptional activation region.

The protein localises to the nucleus. Functionally, trans-acting regulatory protein that activates transcription of the CUP1 gene (metallothionein) in response to copper ions. Binds to the CUP1 UAS sequence 5'-GCTTCTTTTCCGCTGA-3'. Binds DNA only in presence of copper or silver. Copper seems to alter the conformation of the protein. In Saccharomyces cerevisiae (strain ATCC 204508 / S288c) (Baker's yeast), this protein is Transcriptional activator protein CUP2 (CUP2).